The sequence spans 320 residues: Cell division protein FtsQ (320 aa).

Residues 1–24 (MAQTIKRGGKGVRRATAARSAQRK) are disordered. Over 1 to 52 (MAQTIKRGGKGVRRATAARSAQRKVQTARQQTGSVLDSVLRWLPFSEETLHR) the chain is Cytoplasmic. The chain crosses the membrane as a helical span at residues 53 to 73 (ILMTLILAAAAGLVWTVAVMA). The Periplasmic segment spans residues 74 to 320 (GIPALVSEQA…RAASAKSDEG (247 aa)). One can recognise a POTRA domain in the interval 92-160 (FKVSHLEVRG…DTLVIDIVER (69 aa)). The tract at residues 296–320 (AAEKRAEEQARAEAKRAASAKSDEG) is disordered.

Belongs to the FtsQ/DivIB family. FtsQ subfamily.

It localises to the cell inner membrane. Its function is as follows. Essential cell division protein. The protein is Cell division protein FtsQ of Novosphingobium aromaticivorans (strain ATCC 700278 / DSM 12444 / CCUG 56034 / CIP 105152 / NBRC 16084 / F199).